The following is a 535-amino-acid chain: MALEAGYDYLHVAVVQCTPTQAAAVLGVLLLLAIRLAAAARSSSATSPKWKQHRLPPTPPGKLPIIGHLHLIGSHPHVSFRDLHAKYGHNGLMLVQVGAVPTIVVSTPQAAEAVLRTHDHVLASRPRNPVADIIRYNSTDVAFAPYGVYWRTARKVVNTHLLSAKMVFSKRREREEEVRLVVARIRDAAEASPGTALDMTELLGGYASDFVCRAVLGESHRKQGRNKLFRELTETSAALLGGFNVEDYFPKLADVDLFLRIICAKAKSVSKRWDSLFNELLSEYALSGGKQGDHNSEDFVHLLLSLQKDYGLTTDNIKGILVNMFEAAIETSFLVLEYSMSELMNNRHVLAKLQKEVRTATPDGRMVMEEDLSRMPYLKATIKESMRIHPPAPFLLPHFSTHDCEINGYTIPAGTRVIVNAWALARDPTCWDKAEEFFPERFLEQGRDAEVDMYGKDIRFVPFGAGRRICAGATFAIATVEIMLANLIYHFDWEMPAEMERTGAKVDMSDQFGMTLRRTQKLYLVPRIPKCVSSS.

The next 2 membrane-spanning stretches (helical) occupy residues 14–34 (VVQC…LLAI) and 469–489 (ICAG…NLIY). C470 serves as a coordination point for heme.

It belongs to the cytochrome P450 family. Requires heme as cofactor.

It localises to the membrane. The enzyme catalyses 3-hydroxyindolin-2-one + reduced [NADPH--hemoprotein reductase] + O2 = 2-hydroxy-2H-1,4-benzoxazin-3(4H)-one + oxidized [NADPH--hemoprotein reductase] + H2O + H(+). The protein operates within secondary metabolite biosynthesis; 2,4-dihydroxy-1,4-benzoxazin-3-one biosynthesis; 2,4-dihydroxy-1,4-benzoxazin-3-one from indoleglycerol phosphate: step 4/5. Its function is as follows. Catalyzes the conversion of 3-hydroxyindolin-2-one to 2-hydroxy-1,4-benzoxazin-3-one (HBOA). This chain is 3-hydroxyindolin-2-one monooxygenase (CYP71C1), found in Zea mays (Maize).